A 481-amino-acid chain; its full sequence is MFS transporter eqxG (481 aa).

Residues 1–13 (MATTDPAIAAPDD) are compositionally biased toward low complexity. Residues 1–58 (MATTDPAIAAPDDSQLEAGRENIRANVGDALEKPSSSTGTMVDEPTDPNVVDWDGPHD) are disordered. The N-linked (GlcNAc...) asparagine glycan is linked to Asn-64. The chain crosses the membrane as a helical span at residues 72 to 92 (LHLVIVSLFTLAANLAATMFA). Asn-106 carries an N-linked (GlcNAc...) asparagine glycan. 10 helical membrane passes run 111–131 (AMTVSLYVLGFALGPLLLAPL), 146–166 (FVYVVFTIGCAFSTNVAMFLV), 169–189 (IICGCAASGPMSIGGGTVADL), 201–221 (LFTVGPLLGPSGLIGVATVIF), 276–296 (PIVLLISLYTGILFGLIFLLF), 315–335 (GLAYLGLGIGMILGLVLFSVL), 353–373 (LILMKWLGPITPLGLFIYGWT), 380–400 (WIVPIIGTFVVGFGSLFVVIP), 403–423 (IYLVDAFGAEAAASAMAANLL), and 439–459 (LYVSLGLGWGNSVLGFICLLF).

This sequence belongs to the major facilitator superfamily.

It localises to the cell membrane. In terms of biological role, efflux pump that might be required for efficient secretion of equisetin or other secondary metabolies produced by the equisetin gene cluster. The polypeptide is MFS transporter eqxG (Fusarium heterosporum).